We begin with the raw amino-acid sequence, 418 residues long: Light-independent protochlorophyllide reductase subunit N (418 aa).

Residues Cys-17, Cys-42, and Cys-103 each contribute to the [4Fe-4S] cluster site.

Belongs to the BchN/ChlN family. As to quaternary structure, protochlorophyllide reductase is composed of three subunits; ChlL, ChlN and ChlB. Forms a heterotetramer of two ChlB and two ChlN subunits. Requires [4Fe-4S] cluster as cofactor.

It catalyses the reaction chlorophyllide a + oxidized 2[4Fe-4S]-[ferredoxin] + 2 ADP + 2 phosphate = protochlorophyllide a + reduced 2[4Fe-4S]-[ferredoxin] + 2 ATP + 2 H2O. The protein operates within porphyrin-containing compound metabolism; chlorophyll biosynthesis (light-independent). Component of the dark-operative protochlorophyllide reductase (DPOR) that uses Mg-ATP and reduced ferredoxin to reduce ring D of protochlorophyllide (Pchlide) to form chlorophyllide a (Chlide). This reaction is light-independent. The NB-protein (ChlN-ChlB) is the catalytic component of the complex. This is Light-independent protochlorophyllide reductase subunit N from Prochlorococcus marinus (strain NATL2A).